The following is a 443-amino-acid chain: Threonine/serine transporter TdcC (443 aa).

Transmembrane regions (helical) follow at residues 22–42 (TTWT…FFPI), 44–64 (AGFG…PIAF), 97–117 (GVVI…IYGV), 140–160 (FVAL…KDLM), 163–183 (VMSY…LSLI), 207–227 (ILVT…FSPI), 261–281 (MLMV…LSPA), 319–339 (ASII…LGTL), 366–386 (ISMI…PNIL), 389–409 (IEAM…MYAI), and 423–443 (DNVF…YKLF).

This sequence belongs to the amino acid/polyamine transporter 2 family. SdaC/TdcC subfamily.

Its subcellular location is the cell inner membrane. It catalyses the reaction L-threonine(in) + H(+)(in) = L-threonine(out) + H(+)(out). The catalysed reaction is L-serine(in) + H(+)(in) = L-serine(out) + H(+)(out). Its function is as follows. Involved in the import of threonine and serine into the cell, with the concomitant import of a proton (symport system). The protein is Threonine/serine transporter TdcC of Citrobacter koseri (strain ATCC BAA-895 / CDC 4225-83 / SGSC4696).